A 135-amino-acid chain; its full sequence is Putative pre-16S rRNA nuclease (135 aa).

Belongs to the YqgF nuclease family.

The protein resides in the cytoplasm. In terms of biological role, could be a nuclease involved in processing of the 5'-end of pre-16S rRNA. The protein is Putative pre-16S rRNA nuclease of Thermus thermophilus (strain ATCC 27634 / DSM 579 / HB8).